A 100-amino-acid chain; its full sequence is MARKSLIQREKKKQRLERKYNLLRQSLKKEMSEVSSLDDKLDIYRKLQSLPRNSAPTRLRRRCLKTGRPRANYRDFELSGYIIREMAHACLLAGVTKSSW.

The protein belongs to the universal ribosomal protein uS14 family. As to quaternary structure, part of the 30S ribosomal subunit.

Its subcellular location is the plastid. The protein localises to the chloroplast. Binds 16S rRNA, required for the assembly of 30S particles. This is Small ribosomal subunit protein uS14c from Cryptomeria japonica (Japanese cedar).